A 463-amino-acid polypeptide reads, in one-letter code: Maintenance of mitochondrial morphology protein 1-2 (463 aa).

The Lumenal portion of the chain corresponds to 1–23 (MVIPAELIQKALKQQSGWGFTEG). The chain crosses the membrane as a helical span at residues 24–44 (LVLGQLSVIITVIIILKFVIF). Residues 45–463 (AENKSPKKGN…TGADTASGSS (419 aa)) are Cytoplasmic-facing. The interval 72–152 (GGQTANGVKT…VAGSTSNLAV (81 aa)) is disordered. Polar residues predominate over residues 108 to 122 (RPGSSRVSMVRSTSG). One can recognise an SMP-LTD domain in the interval 205–435 (APESLDWFNV…EPHQMIFILP (231 aa)).

Belongs to the MMM1 family. In terms of assembly, homodimer. Component of the ER-mitochondria encounter structure (ERMES) or MDM complex, composed of MMM1, MDM10, MDM12 and MDM34. An MMM1 homodimer associates with one molecule of MDM12 on each side in a pairwise head-to-tail manner, and the SMP-LTD domains of MMM1 and MDM12 generate a continuous hydrophobic tunnel for phospholipid trafficking.

Its subcellular location is the endoplasmic reticulum membrane. Component of the ERMES/MDM complex, which serves as a molecular tether to connect the endoplasmic reticulum (ER) and mitochondria. Components of this complex are involved in the control of mitochondrial shape and protein biogenesis, and function in nonvesicular lipid trafficking between the ER and mitochondria. The MDM12-MMM1 subcomplex functions in the major beta-barrel assembly pathway that is responsible for biogenesis of all outer membrane beta-barrel proteins, and acts in a late step after the SAM complex. The MDM10-MDM12-MMM1 subcomplex further acts in the TOM40-specific pathway after the action of the MDM12-MMM1 complex. Essential for establishing and maintaining the structure of mitochondria and maintenance of mtDNA nucleoids. This Yarrowia lipolytica (strain CLIB 122 / E 150) (Yeast) protein is Maintenance of mitochondrial morphology protein 1-2.